A 109-amino-acid chain; its full sequence is MAEMVARLASERAVVVFTKSGCCMCTAVTTLLGELAVSAAVHELDREPLGKEMERELARRLYGSGGRGGPAVPAVFIGGSLVGSTSKVMAMHLKGELVPMLKNAGALWL.

One can recognise a Glutaredoxin domain in the interval alanine 2 to tryptophan 108. Residues cysteine 22 and cysteine 25 are joined by a disulfide bond. The short motif at alanine 106–leucine 109 is the Responsive for interaction with TGA factors element.

The protein belongs to the glutaredoxin family. CC-type subfamily.

It localises to the cytoplasm. The protein resides in the nucleus. Has a glutathione-disulfide oxidoreductase activity in the presence of NADPH and glutathione reductase. Reduces low molecular weight disulfides and proteins. This Oryza sativa subsp. japonica (Rice) protein is Glutaredoxin-C13 (GRXC13).